A 607-amino-acid polypeptide reads, in one-letter code: Protein NRT1/ PTR FAMILY 1.2 (607 aa).

A run of 10 helical transmembrane segments spans residues 65 to 85 (TNVLFMWSAASNFTPLLGAFL), 96 to 116 (ISIASLSSFLGMVLLWLTAML), 138 to 158 (ASQLALLYSAFALISIGSGGI), 185 to 205 (FFGWYYASSAVAVLIAFTGIV), 215 to 235 (IGFGVPAVLMLIAALLFILAS), 374 to 394 (VPAGSFGMFTIIALALWVILY), 418 to 438 (MGLGLFMSFLAMAISAMVESF), 460 to 480 (AMWLVPQYVLHGLAEALTAIG), 496 to 516 (IAASLFGLGMAVASLLASVVL), and 544 to 564 (YYWVLAIMSFINVIYYVICSW). The residue at position 601 (Ser-601) is a Phosphoserine.

It belongs to the major facilitator superfamily. Proton-dependent oligopeptide transporter (POT/PTR) (TC 2.A.17) family. Expressed in shoots, stems, leaves, flowers and siliques. Mainly detected in larger expanded leaves, in the companion cells of major veins.

It is found in the cell membrane. Functionally, low-affinity nitrate transporter involved in xylem-to-phloem transfer for redistributing nitrate into developing leaves. Not involved in dipeptides transport. The chain is Protein NRT1/ PTR FAMILY 1.2 (NPF1.2) from Arabidopsis thaliana (Mouse-ear cress).